Here is a 300-residue protein sequence, read N- to C-terminus: uncharacterized protein (300 aa).

The a divalent metal cation site is built by glutamate 146, glutamate 148, and aspartate 177.

It belongs to the FAH family.

This is an uncharacterized protein from Staphylococcus aureus (strain MW2).